Reading from the N-terminus, the 156-residue chain is Small ribosomal subunit protein uS7c (156 aa).

Belongs to the universal ribosomal protein uS7 family. As to quaternary structure, part of the 30S ribosomal subunit.

It is found in the plastid. It localises to the chloroplast. One of the primary rRNA binding proteins, it binds directly to 16S rRNA where it nucleates assembly of the head domain of the 30S subunit. This chain is Small ribosomal subunit protein uS7c (rps7), found in Chlorella vulgaris (Green alga).